The chain runs to 347 residues: uncharacterized protein (347 aa).

The protein localises to the cytoplasm. Its subcellular location is the nucleus. This is an uncharacterized protein from Schizosaccharomyces pombe (strain 972 / ATCC 24843) (Fission yeast).